The sequence spans 462 residues: GTPase Der (462 aa).

EngA-type G domains are found at residues 2–164 (QKVI…EEKV) and 198–369 (IRVG…KNYT). Residues 8–15 (GKPNVGKS), 55–59 (DSGGL), 116–119 (NKID), 204–211 (GRVNVGKS), 251–255 (DTAGI), and 315–318 (NKWD) each bind GTP. Positions 370 to 454 (QKIQTSKLNE…PIVLIPKKRG (85 aa)) constitute a KH-like domain.

The protein belongs to the TRAFAC class TrmE-Era-EngA-EngB-Septin-like GTPase superfamily. EngA (Der) GTPase family. Associates with the 50S ribosomal subunit.

In terms of biological role, GTPase that plays an essential role in the late steps of ribosome biogenesis. This Campylobacter concisus (strain 13826) protein is GTPase Der.